The chain runs to 397 residues: ATP-dependent RNA helicase eIF4A (397 aa).

Positions 23–51 (YKFDDLNLKPNIVRGIFGYGYETPSAIQQ) match the Q motif motif. The 171-residue stretch at 54-224 (ILPITEGRDV…TKFMNNPVRI (171 aa)) folds into the Helicase ATP-binding domain. 67–74 (AQSGTGKT) is an ATP binding site. Positions 172–175 (DEAD) match the DEAD box motif. The Helicase C-terminal domain maps to 255–396 (DLYDSISVTQ…EMPADIGSLF (142 aa)).

Belongs to the DEAD box helicase family. eIF4A subfamily. As to quaternary structure, component of the eIF4F complex, which composition varies with external and internal environmental conditions. It is composed of at least eIF4A, eIF4E and eIF4G.

It localises to the cytoplasm. It carries out the reaction ATP + H2O = ADP + phosphate + H(+). In terms of biological role, ATP-dependent RNA helicase which is a subunit of the eIF4F complex involved in cap recognition and is required for mRNA binding to ribosome. In the current model of translation initiation, eIF4A unwinds RNA secondary structures in the 5'-UTR of mRNAs which is necessary to allow efficient binding of the small ribosomal subunit, and subsequent scanning for the initiator codon. The protein is ATP-dependent RNA helicase eIF4A (TIF1) of Lodderomyces elongisporus (strain ATCC 11503 / CBS 2605 / JCM 1781 / NBRC 1676 / NRRL YB-4239) (Yeast).